A 358-amino-acid polypeptide reads, in one-letter code: Trans-enoyl reductase pvhC (358 aa).

Residue 48 to 51 participates in NADP(+) binding; the sequence is VDSK. 134 to 141 lines the substrate pocket; it reads ISFLTSGL. NADP(+)-binding positions include 169-172, 192-195, Tyr-210, and 257-258; these read SSSC, SPHN, and LE. 278 to 282 lines the substrate pocket; the sequence is GPSLL. NADP(+) is bound at residue 347-348; that stretch reads VS.

Belongs to the zinc-containing alcohol dehydrogenase family. As to quaternary structure, monomer.

It functions in the pathway secondary metabolite biosynthesis. In terms of biological role, trans-enoyl reductase; part of the gene cluster that mediates the biosynthesis of varicidin A, an antifungal natural product containing a cis-octahydrodecalin core. The PKS module of pvhA together with the enoylreductase pvhC catalyze the formation of the polyketide unit which is then conjugated to L-isoleucine by the condensation domain of the NRPS module. Activity of the Dieckmann cyclase domain (RED) of pvhA results in release of an acyclic tetramate. The cytochrome P450 monooxygenase pvhE then catalyzes the oxidation of the C21 methyl group to a to carboxylate group. The methyltransferase pvhD then further methylates the pvhE product. The Diels-Alderase pvhB is able to catalyze Diels-Alder cycloaddition using both pvhE and pvhD products as substrates to form the decalin ring, yielding varicidin B and A, respectively. The polypeptide is Trans-enoyl reductase pvhC (Talaromyces variabilis (Penicillium variabile)).